The following is a 160-amino-acid chain: Transcriptional repressor NrdR (160 aa).

The segment at 3-34 is a zinc-finger region; it reads CPFCGAEDTSVVDSRVSEEGSRIRRRRQCTAC. One can recognise an ATP-cone domain in the interval 49 to 139; the sequence is PQIIKQGGNR…VYRSFEDVGD (91 aa).

It belongs to the NrdR family. Requires Zn(2+) as cofactor.

In terms of biological role, negatively regulates transcription of bacterial ribonucleotide reductase nrd genes and operons by binding to NrdR-boxes. This chain is Transcriptional repressor NrdR, found in Nitrosomonas eutropha (strain DSM 101675 / C91 / Nm57).